Consider the following 396-residue polypeptide: Ribose-phosphate pyrophosphokinase 1, chloroplastic (396 aa).

The transit peptide at 1 to 36 directs the protein to the chloroplast; that stretch reads MPLSYSAAAAAAPSPLAARSRGLLRRPPRSSPVVVR. Residues Asp204, His206, Asp215, and Asp219 each coordinate Mg(2+). The interval 290 to 305 is binding of phosphoribosylpyrophosphate; it reads GKVAVMMDDMIDTAGT.

The protein belongs to the ribose-phosphate pyrophosphokinase family. Mg(2+) serves as cofactor.

Its subcellular location is the plastid. The protein resides in the chloroplast. It catalyses the reaction D-ribose 5-phosphate + ATP = 5-phospho-alpha-D-ribose 1-diphosphate + AMP + H(+). In Oryza sativa subsp. japonica (Rice), this protein is Ribose-phosphate pyrophosphokinase 1, chloroplastic.